A 474-amino-acid polypeptide reads, in one-letter code: tRNA-2-methylthio-N(6)-dimethylallyladenosine synthase (474 aa).

The MTTase N-terminal domain maps to 3–120 (KKLHIKTWGC…LPEMINHVQG (118 aa)). The [4Fe-4S] cluster site is built by Cys-12, Cys-49, Cys-83, Cys-157, Cys-161, and Cys-164. In terms of domain architecture, Radical SAM core spans 143 to 375 (RADGPTAFVS…QDRITKQAMR (233 aa)). The TRAM domain occupies 378-441 (RLMLGTVQRI…TNSLRGIVVR (64 aa)).

Belongs to the methylthiotransferase family. MiaB subfamily. As to quaternary structure, monomer. [4Fe-4S] cluster is required as a cofactor.

It localises to the cytoplasm. It catalyses the reaction N(6)-dimethylallyladenosine(37) in tRNA + (sulfur carrier)-SH + AH2 + 2 S-adenosyl-L-methionine = 2-methylsulfanyl-N(6)-dimethylallyladenosine(37) in tRNA + (sulfur carrier)-H + 5'-deoxyadenosine + L-methionine + A + S-adenosyl-L-homocysteine + 2 H(+). Functionally, catalyzes the methylthiolation of N6-(dimethylallyl)adenosine (i(6)A), leading to the formation of 2-methylthio-N6-(dimethylallyl)adenosine (ms(2)i(6)A) at position 37 in tRNAs that read codons beginning with uridine. This chain is tRNA-2-methylthio-N(6)-dimethylallyladenosine synthase, found in Pectobacterium atrosepticum (strain SCRI 1043 / ATCC BAA-672) (Erwinia carotovora subsp. atroseptica).